Here is a 324-residue protein sequence, read N- to C-terminus: Protein SRC2 homolog (324 aa).

A C2 domain is found at 1-111; it reads MECRSLDLTI…LDQNKGDEEK (111 aa). The Cytoplasmic portion of the chain corresponds to 1–279; it reads MECRSLDLTI…KPQKPKKHGK (279 aa). The interval 141–281 is disordered; the sequence is GSSSGPHAPV…QKPKKHGKAG (141 aa). Composition is skewed to low complexity over residues 166–175 and 246–269; these read YPPGHGAPSA and PYGYPQQGYPPQGPYGYPQQQAHG. Positions 270–279 are enriched in basic residues; sequence KPQKPKKHGK. Residues 280–300 traverse the membrane as a helical; Signal-anchor segment; the sequence is AGAGMGLGLGLGAGLLGGLLV. At 301 to 324 the chain is on the lumenal side; it reads GEAVSDIADMGDMGDMGDMGGFDF.

As to quaternary structure, interacts with RBOHF (via N-terminus).

It localises to the endoplasmic reticulum membrane. The protein localises to the protein storage vacuole membrane. The protein resides in the cell membrane. In terms of biological role, may act as an activator of the calcium-dependent activation of RBOHF that mediates reactive oxygen species (ROS) production and may play a role in cold responses. This chain is Protein SRC2 homolog, found in Arabidopsis thaliana (Mouse-ear cress).